We begin with the raw amino-acid sequence, 167 residues long: Gametocyte-specific factor 1 homolog (167 aa).

CHHC U11-48K-type zinc fingers lie at residues 1 to 28 (MVYC…RVIY) and 34 to 61 (LMVC…EDRN). Positions 4, 10, 20, 24, 37, 43, 53, and 57 each coordinate Zn(2+). Positions 128-161 (EKRRHFGEDYEEEKKPRKAKARADLRPTPYEHRR) are enriched in basic and acidic residues. The interval 128 to 167 (EKRRHFGEDYEEEKKPRKAKARADLRPTPYEHRRPYSRRQ) is disordered.

It belongs to the UPF0224 (FAM112) family. As to quaternary structure, interacts with piwi.

Its subcellular location is the nucleus. Its function is as follows. Acts via the piwi-interacting RNA (piRNA) pathway which mediates the repression of transposable elements during meiosis by forming complexes composed of piRNAs and piwi proteins and governs the methylation and subsequent repression of transposons. Required for repression of transposons and neighboring genes in ovarian somatic and germline cells. The polypeptide is Gametocyte-specific factor 1 homolog (Drosophila melanogaster (Fruit fly)).